Reading from the N-terminus, the 77-residue chain is Translation initiation factor IF-1, chloroplastic (77 aa).

An S1-like domain is found at 1-71 (MKEQKLIHEG…TRGRIIYRLR (71 aa)).

This sequence belongs to the IF-1 family. Component of the 30S ribosomal translation pre-initiation complex which assembles on the 30S ribosome in the order IF-2 and IF-3, IF-1 and N-formylmethionyl-tRNA(fMet); mRNA recruitment can occur at any time during PIC assembly.

It localises to the plastid. The protein localises to the chloroplast. In terms of biological role, one of the essential components for the initiation of protein synthesis. Stabilizes the binding of IF-2 and IF-3 on the 30S subunit to which N-formylmethionyl-tRNA(fMet) subsequently binds. Helps modulate mRNA selection, yielding the 30S pre-initiation complex (PIC). Upon addition of the 50S ribosomal subunit IF-1, IF-2 and IF-3 are released leaving the mature 70S translation initiation complex. This Ceratophyllum demersum (Rigid hornwort) protein is Translation initiation factor IF-1, chloroplastic.